The sequence spans 407 residues: Peptidase T (407 aa).

His78 contacts Zn(2+). The active site involves Asp80. Asp139 provides a ligand contact to Zn(2+). The active-site Proton acceptor is the Glu173. The Zn(2+) site is built by Glu174, Asp196, and His378.

Belongs to the peptidase M20B family. Zn(2+) serves as cofactor.

It localises to the cytoplasm. It carries out the reaction Release of the N-terminal residue from a tripeptide.. Its function is as follows. Cleaves the N-terminal amino acid of tripeptides. In Shewanella halifaxensis (strain HAW-EB4), this protein is Peptidase T.